A 226-amino-acid polypeptide reads, in one-letter code: Protein-L-isoaspartate(D-aspartate) O-methyltransferase (226 aa).

S-adenosyl-L-homocysteine is bound by residues 57–60 (VTIS), H65, S89, 115–116 (EH), 147–148 (DG), and T222. The active site involves S60.

The protein belongs to the methyltransferase superfamily. L-isoaspartyl/D-aspartyl protein methyltransferase family. As to quaternary structure, monomer.

Its subcellular location is the cytoplasm. The protein localises to the cytosol. It carries out the reaction [protein]-L-isoaspartate + S-adenosyl-L-methionine = [protein]-L-isoaspartate alpha-methyl ester + S-adenosyl-L-homocysteine. Initiates the repair of damaged proteins by catalyzing methyl esterification of L-isoaspartyl and D-aspartyl residues produced by spontaneous isomerization and racemization of L-aspartyl and L-asparaginyl residues in aging peptides and proteins. This is Protein-L-isoaspartate(D-aspartate) O-methyltransferase (Pcmt) from Drosophila melanogaster (Fruit fly).